We begin with the raw amino-acid sequence, 64 residues long: MPKMKSHRGACKRFKVTGSGKVKREKMNASHILEKKSRKRKRNLHQSTLVDASQEKTVKRMILA.

Belongs to the bacterial ribosomal protein bL35 family.

This is Large ribosomal subunit protein bL35 from Chloroherpeton thalassium (strain ATCC 35110 / GB-78).